The chain runs to 107 residues: Nucleoid-associated protein RC1_2305 (107 aa).

The protein belongs to the YbaB/EbfC family. Homodimer.

It localises to the cytoplasm. It is found in the nucleoid. Functionally, binds to DNA and alters its conformation. May be involved in regulation of gene expression, nucleoid organization and DNA protection. The chain is Nucleoid-associated protein RC1_2305 from Rhodospirillum centenum (strain ATCC 51521 / SW).